The following is a 471-amino-acid chain: Acetylcholinesterase collagenic tail peptide (471 aa).

The N-terminal stretch at 1–30 is a signal peptide; sequence MLGILLQKATATLASGLNSSRAGMFPIALG. The segment at 70–86 is PRAD; that stretch reads CCLLTPPPPPMFPPPFF. Collagen-like domains lie at 118-282 and 293-307; these read GPPG…SGLP and GPKG…VGRC. Disordered stretches follow at residues 140-205 and 237-267; these read EIGE…GEKG and KGVS…IGPP. Composition is skewed to low complexity over residues 155–164 and 242–251; these read VRGPRGMPGS and APGHRGPVGR. Tandem repeats lie at residues 388 to 413 and 420 to 443. The segment at 388–443 is 2 X 26 AA approximate repeats; that stretch reads FCGDEIVQVENGEECDDGNRIVTDSCINCKQAYCGDGYLQSGLEECDGKDFGYHTC.

It belongs to the COLQ family. The asymmetric form of AChE is a disulfide-bonded oligomer composed of a collagenic subunit (Q) and a variable number of asymmetric (T) catalytic subunits. The N-terminal of the collagenic subunit (Q) associates with the C-terminal of the catalytic subunit (T). In terms of tissue distribution, expressed in electric organs but not in muscle.

It localises to the synapse. Anchors the catalytic subunits of asymmetric AChE to the synaptic basal lamina. The sequence is that of Acetylcholinesterase collagenic tail peptide from Torpedo marmorata (Marbled electric ray).